The sequence spans 338 residues: Putative clathrin assembly protein At5g10410 (338 aa).

Residues 27–157 (FGSTAVKYIH…WVPKVLGSFP (131 aa)) enclose the ENTH domain.

It localises to the membrane. Its subcellular location is the clathrin-coated pit. The protein localises to the golgi apparatus. It is found in the cytoplasmic vesicle. The protein resides in the clathrin-coated vesicle. The polypeptide is Putative clathrin assembly protein At5g10410 (Arabidopsis thaliana (Mouse-ear cress)).